A 157-amino-acid polypeptide reads, in one-letter code: Ribonuclease 8 (157 aa).

Residues 1-30 form the signal peptide; it reads MAPARAGCCPLLLLLLLLLGLWVAEVLVSA. H45 (proton acceptor) is an active-site residue. 4 cysteine pairs are disulfide-bonded: C53-C96, C67-C121, C85-C136, and C92-C99. Residues 68–72 and K93 contribute to the substrate site; that span reads KDLNT. H152 acts as the Proton donor in catalysis.

This sequence belongs to the pancreatic ribonuclease family.

The protein resides in the secreted. In terms of biological role, has a low ribonuclease activity. The chain is Ribonuclease 8 (RNASE8) from Pan troglodytes (Chimpanzee).